Consider the following 548-residue polypeptide: BTB/POZ domain-containing protein At5g17580 (548 aa).

The 68-residue stretch at 7–74 (SDLHINVKGV…CNGSEFKFTS (68 aa)) folds into the BTB domain. The region spanning 180 to 442 (DWKSEDLITI…VNVLCVSQLQ (263 aa)) is the NPH3 domain. Y383 carries the post-translational modification Phosphotyrosine. Positions 442 to 493 (QIRDTVAKEIKGMEEKVDEEEEEEIEVSSDEDEMEKMSNKLLGLEIENDECV) form a coiled coil.

The protein belongs to the NPH3 family.

It participates in protein modification; protein ubiquitination. In terms of biological role, may act as a substrate-specific adapter of an E3 ubiquitin-protein ligase complex (CUL3-RBX1-BTB) which mediates the ubiquitination and subsequent proteasomal degradation of target proteins. This is BTB/POZ domain-containing protein At5g17580 from Arabidopsis thaliana (Mouse-ear cress).